A 266-amino-acid chain; its full sequence is GTP cyclohydrolase III (266 aa).

It belongs to the archaeal-type GTP cyclohydrolase family.

It carries out the reaction GTP + 3 H2O = 2-amino-5-formylamino-6-(5-phospho-D-ribosylamino)pyrimidin-4(3H)-one + 2 phosphate + 2 H(+). Functionally, catalyzes the formation of 2-amino-5-formylamino-6-ribofuranosylamino-4(3H)-pyrimidinone ribonucleotide monophosphate and inorganic phosphate from GTP. Also has an independent pyrophosphate phosphohydrolase activity. This Methanococcus maripaludis (strain C7 / ATCC BAA-1331) protein is GTP cyclohydrolase III.